Reading from the N-terminus, the 422-residue chain is Phospho-N-acetylmuramoyl-pentapeptide-transferase (422 aa).

A run of 9 helical transmembrane segments spans residues 28–48 (LMAV…FINL), 71–91 (VGVP…PCLL), 95–115 (LDNI…SLGF), 136–156 (IIGQ…SPDV), 211–231 (AGWF…SNGA), 239–259 (GMAA…AYVS), 279–299 (LVIY…YNAY), 313–333 (IGGI…IPIL), and 399–419 (KITV…IITL).

Belongs to the glycosyltransferase 4 family. MraY subfamily. Mg(2+) serves as cofactor.

It localises to the cell inner membrane. The catalysed reaction is UDP-N-acetyl-alpha-D-muramoyl-L-alanyl-gamma-D-glutamyl-meso-2,6-diaminopimeloyl-D-alanyl-D-alanine + di-trans,octa-cis-undecaprenyl phosphate = di-trans,octa-cis-undecaprenyl diphospho-N-acetyl-alpha-D-muramoyl-L-alanyl-D-glutamyl-meso-2,6-diaminopimeloyl-D-alanyl-D-alanine + UMP. The protein operates within cell wall biogenesis; peptidoglycan biosynthesis. Catalyzes the initial step of the lipid cycle reactions in the biosynthesis of the cell wall peptidoglycan: transfers peptidoglycan precursor phospho-MurNAc-pentapeptide from UDP-MurNAc-pentapeptide onto the lipid carrier undecaprenyl phosphate, yielding undecaprenyl-pyrophosphoryl-MurNAc-pentapeptide, known as lipid I. This Bacteroides thetaiotaomicron (strain ATCC 29148 / DSM 2079 / JCM 5827 / CCUG 10774 / NCTC 10582 / VPI-5482 / E50) protein is Phospho-N-acetylmuramoyl-pentapeptide-transferase.